We begin with the raw amino-acid sequence, 417 residues long: Calreticulin (417 aa).

The signal sequence occupies residues 1-17; it reads MLLSVPLLLGLLGLAAA. The N-domain stretch occupies residues 18–197; sequence EPAVYFKEQF…NSQVESGSLE (180 aa). Gln26 contacts Ca(2+). Lys48 bears the N6-acetyllysine mark. Ca(2+)-binding residues include Lys62 and Lys64. An intrachain disulfide couples Cys105 to Cys137. Tyr109, Lys111, Tyr128, and Asp135 together coordinate an alpha-D-glucoside. Lys159 is subject to N6-acetyllysine. A 1-1 repeat occupies 191-202; that stretch reads VESGSLEDDWDF. A 4 X approximate repeats region spans residues 191–255; the sequence is VESGSLEDDW…DAKKPEDWDE (65 aa). Residues 193 to 278 are disordered; that stretch reads SGSLEDDWDF…PEYKGEWKPR (86 aa). Residues 198 to 308 form a P-domain region; it reads DDWDFLPPKK…YSPDPSIYAY (111 aa). Residues 207-251 show a composition bias toward basic and acidic residues; it reads KIKDPDASKPEDWDERAKIDDPTDSKPEDWDKPEHIPDPDAKKPE. Lys209 bears the N6-acetyllysine mark. 6 tandem repeats follow at residues 210-221, 227-238, 244-255, 259-269, 273-283, and 287-297. The tract at residues 237–270 is interaction with PPIB; sequence DKPEHIPDPDAKKPEDWDEEMDGEWEPPVIQNPE. Residues 252–261 are compositionally biased toward acidic residues; sequence DWDEEMDGEW. Residues 259 to 297 are 3 X approximate repeats; it reads GEWEPPVIQNPEYKGEWKPRQIDNPDYKGTWIHPEIDNP. The tract at residues 309–417 is C-domain; that stretch reads DNFGVLGLDL…DVPGQAKDEL (109 aa). Asp317 lines the an alpha-D-glucoside pocket. Residue Asp328 participates in Ca(2+) binding. Positions 350 to 417 are disordered; it reads TKAAEKQMKD…DVPGQAKDEL (68 aa). Residues 352-379 show a composition bias toward basic and acidic residues; it reads AAEKQMKDKQDEEQRLKEEEEDKKRKEE. A compositionally biased stretch (acidic residues) spans 380–409; it reads EEAEDKEDDEDKDEDEEDEEDKEEDEEEDV. A Prevents secretion from ER motif is present at residues 414–417; the sequence is KDEL.

It belongs to the calreticulin family. In terms of assembly, monomer. Component of an EIF2 complex at least composed of CELF1/CUGBP1, CALR, CALR3, EIF2S1, EIF2S2, HSP90B1 and HSPA5. Interacts with PDIA3/ERp57 and SPACA9. Interacts with TRIM21. Interacts with NR3C1. Interacts with PPIB. Interacts (via P-domain) with PDIA5. Interacts with GABARAP. Interacts with CLCC1.

The protein resides in the endoplasmic reticulum lumen. It is found in the cytoplasm. It localises to the cytosol. Its subcellular location is the secreted. The protein localises to the extracellular space. The protein resides in the extracellular matrix. It is found in the cell surface. It localises to the sarcoplasmic reticulum lumen. Its subcellular location is the cytoplasmic vesicle. The protein localises to the secretory vesicle. The protein resides in the cortical granule. It is found in the cytoplasmic granule. In terms of biological role, calcium-binding chaperone that promotes folding, oligomeric assembly and quality control in the endoplasmic reticulum (ER) via the calreticulin/calnexin cycle. This lectin interacts transiently with almost all of the monoglucosylated glycoproteins that are synthesized in the ER. Interacts with the DNA-binding domain of NR3C1 and mediates its nuclear export. Involved in maternal gene expression regulation. May participate in oocyte maturation via the regulation of calcium homeostasis. This Chlorocebus aethiops (Green monkey) protein is Calreticulin (CALR).